Reading from the N-terminus, the 216-residue chain is Fucoxanthin-chlorophyll a-c binding protein C, chloroplastic (216 aa).

Residues 1-38 (MKSAIMAVASAAPGLRGPSAFNGAALTTSAKSSSAMKM) constitute a chloroplast transit peptide. 3 helical membrane-spanning segments follow: residues 80–100 (IAML…PGML), 121–141 (IPPG…LAVM), and 182–202 (GRAA…NNKP).

The protein belongs to the fucoxanthin chlorophyll protein family. As to quaternary structure, the LHC complex of chromophytic algae is composed of fucoxanthin, chlorophyll A and C bound non-covalently by fucoxanthin chlorophyll proteins (FCPs). The ratio of pigments in this LHC is; fucoxanthin: chlorophyll C: chlorophyll A; (0.6-1): (0.1-0.3): (1).

It localises to the plastid. Its subcellular location is the chloroplast thylakoid membrane. Its function is as follows. The light-harvesting complex (LHC) functions as a light receptor, it captures and delivers excitation energy to photosystems with which it is closely associated. Energy is transferred from the carotenoid and chlorophyll C (or B) to chlorophyll A and the photosynthetic reaction centers where it is used to synthesize ATP and reducing power. This Macrocystis pyrifera (Giant kelp) protein is Fucoxanthin-chlorophyll a-c binding protein C, chloroplastic (FCPC).